The primary structure comprises 141 residues: Nucleoside diphosphate kinase (141 aa).

K11, F59, R87, T93, R104, and N114 together coordinate ATP. Catalysis depends on H117, which acts as the Pros-phosphohistidine intermediate.

It belongs to the NDK family. Homotetramer. Mg(2+) is required as a cofactor.

Its subcellular location is the cytoplasm. The enzyme catalyses a 2'-deoxyribonucleoside 5'-diphosphate + ATP = a 2'-deoxyribonucleoside 5'-triphosphate + ADP. It carries out the reaction a ribonucleoside 5'-diphosphate + ATP = a ribonucleoside 5'-triphosphate + ADP. Its function is as follows. Major role in the synthesis of nucleoside triphosphates other than ATP. The ATP gamma phosphate is transferred to the NDP beta phosphate via a ping-pong mechanism, using a phosphorylated active-site intermediate. The protein is Nucleoside diphosphate kinase of Pseudomonas putida (strain GB-1).